The following is a 214-amino-acid chain: Attacin (214 aa).

The first 19 residues, 1–19 (MSKSVALLLLCACLASGRH), serve as a signal peptide directing secretion. Residues 20–26 (VPTRARR) constitute a propeptide that is removed on maturation.

This sequence belongs to the attacin/sarcotoxin-2 family. As to expression, highest expression in fat body and hemocytes and to a much lesser extent in Malpighian tubules, silk gland and midgut.

It localises to the secreted. Its function is as follows. Hemolymph antibacterial protein. Has a wide spectrum of activity against both Gram-positive and Gram-negative bacteria. This chain is Attacin, found in Bombyx mori (Silk moth).